Consider the following 439-residue polypeptide: Xaa-Pro dipeptidase (439 aa).

5 residues coordinate Mn(2+): Asp-244, Asp-255, His-335, Glu-380, and Glu-419.

The protein belongs to the peptidase M24B family. Bacterial-type prolidase subfamily. The cofactor is Mn(2+).

The enzyme catalyses Xaa-L-Pro dipeptide + H2O = an L-alpha-amino acid + L-proline. Splits dipeptides with a prolyl residue in the C-terminal position. The sequence is that of Xaa-Pro dipeptidase from Shewanella sediminis (strain HAW-EB3).